Consider the following 161-residue polypeptide: Urease accessory protein UreE (161 aa).

The disordered stretch occupies residues 133–161; that stretch reads EPEAGAYQSAPHSHSHAHDHPFVRLPAHS.

The protein belongs to the UreE family.

It localises to the cytoplasm. In terms of biological role, involved in urease metallocenter assembly. Binds nickel. Probably functions as a nickel donor during metallocenter assembly. This Pseudomonas putida (strain W619) protein is Urease accessory protein UreE.